A 709-amino-acid chain; its full sequence is MAKDLKFLRNIGIMAHIDAGKTTTTERILYYTGLTHKIGEVHEGGAVMDWMEQEQERGITITAAATTTFWKYPTVQGQVTKDTQQYSINIIDTPGHVDFTVEVERSLRVLDGAVALFCAVSGVEPQSETVWRQADKYRVPRICFVNKMDRAGADFFNAVSEIKSKLGANPIPLQIPIGSEDTFKGVVDLIRNQAIIWNDEDLGMTYQVVPIPEDLKETVEEYRQKLMESVAEYDEVLLEKYFNDPNTITTEEIMVAIRKAVIDMSISPVLCGASFKNKGVQALLDAVCTYLPSPLDLPPVQGTNPDTEEKQIRKPDVNEPFAALAFKIATDPFVGRLAFMRVYSGKLDGSSYVYNNRTGKKERISRLMQMHANKQNPIDSIEAGDICAAVGFKDIRTGDTLTDEKNKIILESIVFPEPVIGYSIEPKKQADVDKLSMAISKLVEEDPTLHVETNEETGQTVMKGMGELHLEIIIDRLRREFKLEINQGAPQVAYKEALTSTIEHKEVYKKQTGGRGKFADIVFELGPREDGQMGLQFTNEIVGGAIPREFIPAIQKGFAAAMANGPLASYPVESMKVKLIHGSFHEVDSDSLSFELAARIGFKEAAKKASPVIMEPIMAVEVTTPDEFTGPVTGDLNKRRGIMRGMDAKGNTQVVKADVPLSELFGYVTDLRTITSGRAAATLTFSRYEQVPKQLADSIVEKVKGTANK.

The tr-type G domain maps to 6-295; it reads KFLRNIGIMA…AVCTYLPSPL (290 aa). Residues 15-22, 92-96, and 146-149 each bind GTP; these read AHIDAGKT, DTPGH, and NKMD.

The protein belongs to the TRAFAC class translation factor GTPase superfamily. Classic translation factor GTPase family. EF-G/EF-2 subfamily.

It localises to the cytoplasm. Catalyzes the GTP-dependent ribosomal translocation step during translation elongation. During this step, the ribosome changes from the pre-translocational (PRE) to the post-translocational (POST) state as the newly formed A-site-bound peptidyl-tRNA and P-site-bound deacylated tRNA move to the P and E sites, respectively. Catalyzes the coordinated movement of the two tRNA molecules, the mRNA and conformational changes in the ribosome. This Amoebophilus asiaticus (strain 5a2) protein is Elongation factor G.